A 404-amino-acid chain; its full sequence is Probable tRNA sulfurtransferase (404 aa).

In terms of domain architecture, THUMP spans 60-165 (QPVVEALKLV…DEAAYISYEE (106 aa)). ATP contacts are provided by residues 183-184 (ML), 208-209 (HF), Arg265, Gly287, and Gln296.

This sequence belongs to the ThiI family.

Its subcellular location is the cytoplasm. It carries out the reaction [ThiI sulfur-carrier protein]-S-sulfanyl-L-cysteine + a uridine in tRNA + 2 reduced [2Fe-2S]-[ferredoxin] + ATP + H(+) = [ThiI sulfur-carrier protein]-L-cysteine + a 4-thiouridine in tRNA + 2 oxidized [2Fe-2S]-[ferredoxin] + AMP + diphosphate. The catalysed reaction is [ThiS sulfur-carrier protein]-C-terminal Gly-Gly-AMP + S-sulfanyl-L-cysteinyl-[cysteine desulfurase] + AH2 = [ThiS sulfur-carrier protein]-C-terminal-Gly-aminoethanethioate + L-cysteinyl-[cysteine desulfurase] + A + AMP + 2 H(+). Its pathway is cofactor biosynthesis; thiamine diphosphate biosynthesis. Catalyzes the ATP-dependent transfer of a sulfur to tRNA to produce 4-thiouridine in position 8 of tRNAs, which functions as a near-UV photosensor. Also catalyzes the transfer of sulfur to the sulfur carrier protein ThiS, forming ThiS-thiocarboxylate. This is a step in the synthesis of thiazole, in the thiamine biosynthesis pathway. The sulfur is donated as persulfide by IscS. In Streptococcus pyogenes serotype M5 (strain Manfredo), this protein is Probable tRNA sulfurtransferase.